The sequence spans 414 residues: Esterase FrsA (414 aa).

It belongs to the FrsA family.

The enzyme catalyses a carboxylic ester + H2O = an alcohol + a carboxylate + H(+). Catalyzes the hydrolysis of esters. The chain is Esterase FrsA from Escherichia coli O6:K15:H31 (strain 536 / UPEC).